The following is a 210-amino-acid chain: ATP-dependent Clp protease proteolytic subunit (210 aa).

Ser107 (nucleophile) is an active-site residue. His132 is an active-site residue.

Belongs to the peptidase S14 family. In terms of assembly, fourteen ClpP subunits assemble into 2 heptameric rings which stack back to back to give a disk-like structure with a central cavity, resembling the structure of eukaryotic proteasomes.

It is found in the cytoplasm. The catalysed reaction is Hydrolysis of proteins to small peptides in the presence of ATP and magnesium. alpha-casein is the usual test substrate. In the absence of ATP, only oligopeptides shorter than five residues are hydrolyzed (such as succinyl-Leu-Tyr-|-NHMec, and Leu-Tyr-Leu-|-Tyr-Trp, in which cleavage of the -Tyr-|-Leu- and -Tyr-|-Trp bonds also occurs).. In terms of biological role, cleaves peptides in various proteins in a process that requires ATP hydrolysis. Has a chymotrypsin-like activity. Plays a major role in the degradation of misfolded proteins. The chain is ATP-dependent Clp protease proteolytic subunit from Cereibacter sphaeroides (strain ATCC 17025 / ATH 2.4.3) (Rhodobacter sphaeroides).